A 331-amino-acid polypeptide reads, in one-letter code: MDPGTLNSVINRLLEAREKPGKIVQLSETEIKQLCFVSRDIFLRQPNLLELEAPVKICGDIHGQYPDLLRLFEHGGYPPNSNYLFLGDYVDRGKQSLETICLLLAYKIKFPENFFLLRGNHESASINRIYGFYDECKRRFSVKIWRIFTDCFNCLPVAALIDERIFCMHGGLSPELLSLRQIRDIRRPTDIPDRGLLCDLLWSDPDKDVRGWGPNDRGVSYTFGSDIVSGFLKRLDLDLICRAHQVVEDGFEFFANKQLVTIFSAPNYCGEFDNAGAMMSVSEDLTCSFQILKSNDKKSKFSFGSRGGAKTSFPYPKVKSILSSQNSKEYN.

Methionine 1 carries the N-acetylmethionine modification. Aspartate 60, histidine 62, aspartate 88, and asparagine 120 together coordinate Mn(2+). The active-site Proton donor is the histidine 121. Positions 169 and 244 each coordinate Mn(2+).

This sequence belongs to the PPP phosphatase family. PP-1 subfamily. The cofactor is Mn(2+). As to expression, expressed in roots, rosettes and flowers.

It localises to the nucleus. It is found in the cytoplasm. It carries out the reaction O-phospho-L-seryl-[protein] + H2O = L-seryl-[protein] + phosphate. It catalyses the reaction O-phospho-L-threonyl-[protein] + H2O = L-threonyl-[protein] + phosphate. Phosphatase activity is strongly reduced by the protein phosphatase inhibitor 2 (I-2). In terms of biological role, serine/threonine-protein phosphatase that possesses phosphatase activity toward para-nitrophenyl phosphate (pNPP) in vitro. The sequence is that of Serine/threonine-protein phosphatase PP1 isozyme 7 from Arabidopsis thaliana (Mouse-ear cress).